The following is a 352-amino-acid chain: MSILAEKLSSILKRYDELTALLSSVEVVSDIKKLTELSKEQSSIEEISVASKEYLSVLEGIKENKELLEDKELSELAKEELKILEIQKSELETAIKQLLIPKDPNDDKNIYLELRAGTGGDEAGIFVGDLFKAYCRYADLKKWKVEIVSSSENSVGGYKEIIVLIKGKGVYSRLKFEAGTHRVQRVPETESQGRIHTSAITVAIMPEVDDVEVSINPSDLKIEVFRAGGHGGQCVNTTDSAVRITHLPTNISVSMQDEKSQHKNKDKALKILKARLYEKQIEEQQLANAKDRKEQVGSGDRSERIRTYNYPQNRLSEHRINLTLYSLEEIMLSGNLDEVINPLIAHAQSQFE.

Position 233 is an N5-methylglutamine (Gln233). The disordered stretch occupies residues 288 to 309 (NAKDRKEQVGSGDRSERIRTYN). The span at 289-306 (AKDRKEQVGSGDRSERIR) shows a compositional bias: basic and acidic residues.

This sequence belongs to the prokaryotic/mitochondrial release factor family. Methylated by PrmC. Methylation increases the termination efficiency of RF1.

The protein localises to the cytoplasm. Functionally, peptide chain release factor 1 directs the termination of translation in response to the peptide chain termination codons UAG and UAA. This is Peptide chain release factor 1 (prfA) from Helicobacter pylori (strain J99 / ATCC 700824) (Campylobacter pylori J99).